The following is a 223-amino-acid chain: Cytidylate kinase (223 aa).

17–25 (GPTASGKGT) contacts ATP.

Belongs to the cytidylate kinase family. Type 1 subfamily.

It localises to the cytoplasm. It carries out the reaction CMP + ATP = CDP + ADP. It catalyses the reaction dCMP + ATP = dCDP + ADP. In Bordetella pertussis (strain Tohama I / ATCC BAA-589 / NCTC 13251), this protein is Cytidylate kinase.